Here is a 228-residue protein sequence, read N- to C-terminus: Aldehyde dehydrogenase 9 (228 aa).

Gly76–Ala81 contributes to the NAD(+) binding site. Catalysis depends on residues Glu99 and Cys132.

It belongs to the aldehyde dehydrogenase family.

The enzyme catalyses an aldehyde + NAD(+) + H2O = a carboxylate + NADH + 2 H(+). It participates in alcohol metabolism; ethanol degradation; acetate from ethanol: step 2/2. This chain is Aldehyde dehydrogenase 9 (ALDH9), found in Polyandrocarpa misakiensis (Tunicate).